A 131-amino-acid chain; its full sequence is Lymphocyte antigen 6C1 (131 aa).

The signal sequence occupies residues 1–26 (MDTSHTTKSCVLILLVALLCAERAQG). The UPAR/Ly6 domain occupies 27-115 (LQCYECYGVP…PTAGSTWTMA (89 aa)). 5 cysteine pairs are disulfide-bonded: cysteine 29–cysteine 53, cysteine 32–cysteine 41, cysteine 46–cysteine 74, cysteine 78–cysteine 95, and cysteine 96–cysteine 101. Glycine 109 carries the GPI-anchor amidated glycine lipid modification. Residues 110-131 (STWTMAGVLLFSLSSVVLQTLL) constitute a propeptide, removed in mature form.

It is found in the cell membrane. This is Lymphocyte antigen 6C1 (Ly6c1) from Mus musculus (Mouse).